Here is a 423-residue protein sequence, read N- to C-terminus: POU domain, class 5, transcription factor 1.3 (423 aa).

The segment at 85–211 (GALSSGDPSP…GSGNEEDGTT (127 aa)) is disordered. The segment covering 94–110 (PEGRNEEDHGSISEERS) has biased composition (basic and acidic residues). Polar residues-rich tracts occupy residues 111–120 (SGTPSPNSPM), 156–173 (PQQS…GASN), and 194–203 (PSPNNASFGS). The 75-residue stretch at 207 to 281 (EDGTTLEEME…LLEQWLGEAE (75 aa)) folds into the POU-specific domain. Residues 301-360 (KRKMRTCFDSVLKGRLEGHFMCNQKPGARELAEIAKELGLEKDVVRVWFCNRRQKEKSKS) constitute a DNA-binding region (homeobox).

It belongs to the POU transcription factor family. Class-5 subfamily. As to quaternary structure, interacts with the transcription factors tcf7l1/tcf3 and vegt.

The protein localises to the nucleus. Transcription factor that binds to the octamer motif (5'-ATTTGCAT-3'). Antagonizes the activity of nodal/activin signaling during gastrulation to suppress mesendoderm formation. Acts maternally to inhibit vegt and beta-catenin-activated gene transcription, probably by forming a transcriptional repression complex on the promoters of target genes. Binds to an octamer motif in interspersed RNA. The sequence is that of POU domain, class 5, transcription factor 1.3 (pou5f1.3) from Xenopus tropicalis (Western clawed frog).